A 272-amino-acid polypeptide reads, in one-letter code: Aquaporin-1 (272 aa).

The Cytoplasmic segment spans residues 1–11 (MASEFKKKLFW). Residues 12–29 (RAVVAEFLAMILFIFISI) traverse the membrane as a helical segment. The Extracellular portion of the chain corresponds to 30 to 48 (GSALGFHYPIKSNQTTGAV). Asn-42 carries N-linked (GlcNAc...) asparagine glycosylation. A helical membrane pass occupies residues 49 to 67 (QDNVKVSLAFGLSIATLAQ). The Cytoplasmic portion of the chain corresponds to 68 to 70 (SVG). An intramembrane segment occupies 71–84 (HISGAHLNPAVTLG). The NPA 1 motif lies at 78–80 (NPA). The Cytoplasmic portion of the chain corresponds to 85 to 92 (LLLSCQIS). The chain crosses the membrane as a helical span at residues 93 to 111 (ILRAIMYIIAQCVGAIVAT). Residues 112 to 135 (VILSGITSSLPDNSLGLNALAPGV) lie on the Extracellular side of the membrane. Residues 136–155 (NSGQGLGIEIIGTLQLVLCV) form a helical membrane-spanning segment. The Cytoplasmic portion of the chain corresponds to 156 to 166 (LATTDRRRRRD). The chain crosses the membrane as a helical span at residues 167–184 (LGDSGPLAIGFSVALGHL). Over 185-189 (LAIDY) the chain is Extracellular. An intramembrane segment occupies 190-202 (TGCGINPARSFGS). Positions 195–197 (NPA) match the NPA 2 motif. The Extracellular segment spans residues 203–209 (SVITHNF). A helical transmembrane segment spans residues 210–227 (QDHWIFWVGPFIGAALAV). At 228-272 (LIYDFILAPRSSDLTDRVKVWTSGQVEEYDLDADDINSRVEMKPK) the chain is on the cytoplasmic side. Ser-250 is subject to Phosphoserine. Position 256 is a phosphotyrosine (Tyr-256). Ser-265 bears the Phosphoserine mark.

This sequence belongs to the MIP/aquaporin (TC 1.A.8) family. In terms of assembly, homotetramer; each monomer provides an independent water pore. Component of the ankyrin-1 complex in the erythrocyte, composed of ANK1, RHCE, RHAG, SLC4A1, EPB42, GYPA, GYPB and AQP1. Interacts with EPHB2; involved in endolymph production in the inner ear. Identified in a complex with STOM. Interacts (via the N-terminal) with ANK1 (via ANK 1-5 repeats). Interacts (via the C-terminal) with EPB42. In terms of tissue distribution, detected in fetal kidney (at protein level). Detected in fetal kidney.

The protein localises to the cell membrane. The enzyme catalyses H2O(in) = H2O(out). It carries out the reaction nitric oxide(out) = nitric oxide(in). It catalyses the reaction CO2(out) = CO2(in). The catalysed reaction is glycerol(in) = glycerol(out). The enzyme catalyses H2O2(out) = H2O2(in). It carries out the reaction K(+)(in) = K(+)(out). It catalyses the reaction Na(+)(in) = Na(+)(out). Forms a water channel that facilitates the transport of water across cell membranes, playing a crucial role in water homeostasis in various tissues. Could also be permeable to small solutes including hydrogen peroxide, glycerol and gases such as amonnia (NH3), nitric oxide (NO) and carbon dioxide (CO2). Recruited to the ankyrin-1 complex, a multiprotein complex of the erythrocyte membrane, it could be part of a CO2 metabolon, linking facilitated diffusion of CO2 across the membrane, anion exchange of Cl(-)/HCO3(-) and interconversion of dissolved CO2 and carbonic acid in the cytosol. In vitro, it shows non-selective gated cation channel activity and may be permeable to cations like K(+) and Na(+) in vivo. The sequence is that of Aquaporin-1 from Ovis aries (Sheep).